The primary structure comprises 119 residues: Large ribosomal subunit protein bL20c (119 aa).

It belongs to the bacterial ribosomal protein bL20 family.

The protein resides in the plastid. It localises to the chloroplast. Functionally, binds directly to 23S ribosomal RNA and is necessary for the in vitro assembly process of the 50S ribosomal subunit. It is not involved in the protein synthesizing functions of that subunit. In Zea mays (Maize), this protein is Large ribosomal subunit protein bL20c (rpl20).